A 283-amino-acid chain; its full sequence is D-alanine aminotransferase (283 aa).

Y32 is a substrate binding site. R51 contacts pyridoxal 5'-phosphate. Residues R99 and H101 each coordinate substrate. The Proton acceptor role is filled by K146. An N6-(pyridoxal phosphate)lysine modification is found at K146. Position 178 (E178) interacts with pyridoxal 5'-phosphate.

Belongs to the class-IV pyridoxal-phosphate-dependent aminotransferase family. In terms of assembly, homodimer. Requires pyridoxal 5'-phosphate as cofactor.

The catalysed reaction is D-alanine + 2-oxoglutarate = D-glutamate + pyruvate. Acts on the D-isomers of alanine, leucine, aspartate, glutamate, aminobutyrate, norvaline and asparagine. The enzyme transfers an amino group from a substrate D-amino acid to the pyridoxal phosphate cofactor to form pyridoxamine and an alpha-keto acid in the first half-reaction. The second-half reaction is the reverse of the first, transferring the amino group from the pyridoxamine to a second alpha-keto acid to form the product D-amino acid via a ping-pong mechanism. This is an important process in the formation of D-alanine and D-glutamate, which are essential bacterial cell wall components. This is D-alanine aminotransferase (dat) from Bacillus sp. (strain YM-1).